A 243-amino-acid chain; its full sequence is Pyridoxine 5'-phosphate synthase (243 aa).

Asparagine 9 is a binding site for 3-amino-2-oxopropyl phosphate. 11 to 12 (DH) is a 1-deoxy-D-xylulose 5-phosphate binding site. Residue arginine 20 coordinates 3-amino-2-oxopropyl phosphate. The active-site Proton acceptor is the histidine 45. 1-deoxy-D-xylulose 5-phosphate contacts are provided by arginine 47 and histidine 52. The active-site Proton acceptor is glutamate 72. Threonine 102 contacts 1-deoxy-D-xylulose 5-phosphate. The Proton donor role is filled by histidine 193. Residues glycine 194 and 215 to 216 (GH) contribute to the 3-amino-2-oxopropyl phosphate site.

Belongs to the PNP synthase family. As to quaternary structure, homooctamer; tetramer of dimers.

The protein resides in the cytoplasm. It catalyses the reaction 3-amino-2-oxopropyl phosphate + 1-deoxy-D-xylulose 5-phosphate = pyridoxine 5'-phosphate + phosphate + 2 H2O + H(+). It functions in the pathway cofactor biosynthesis; pyridoxine 5'-phosphate biosynthesis; pyridoxine 5'-phosphate from D-erythrose 4-phosphate: step 5/5. Functionally, catalyzes the complicated ring closure reaction between the two acyclic compounds 1-deoxy-D-xylulose-5-phosphate (DXP) and 3-amino-2-oxopropyl phosphate (1-amino-acetone-3-phosphate or AAP) to form pyridoxine 5'-phosphate (PNP) and inorganic phosphate. The polypeptide is Pyridoxine 5'-phosphate synthase (Yersinia pestis).